The following is a 467-amino-acid chain: Dimethylamine methyltransferase MtbB3 (467 aa).

Position 356 (pyrrolysine 356) is a non-standard amino acid, pyrrolysine.

This sequence belongs to the dimethylamine methyltransferase family.

The enzyme catalyses Co(I)-[dimethylamine-specific corrinoid protein] + dimethylamine + H(+) = methyl-Co(III)-[dimethylamine-specific corrinoid protein] + methylamine. The protein operates within one-carbon metabolism; methanogenesis from dimethylamine. Its function is as follows. Catalyzes the transfer of a methyl group from dimethylamine to the corrinoid cofactor of MtbC. The sequence is that of Dimethylamine methyltransferase MtbB3 (mtbB3) from Methanosarcina mazei (strain ATCC BAA-159 / DSM 3647 / Goe1 / Go1 / JCM 11833 / OCM 88) (Methanosarcina frisia).